The primary structure comprises 76 residues: Putative phosphotransferase enzyme IIA component YyzE (76 aa).

One can recognise a PTS EIIA type-1 domain in the interval 1 to 76; that stretch reads MVTPTKHAIG…LHQKIFTVVS (76 aa). The active-site Tele-phosphohistidine intermediate is His-22.

It localises to the cytoplasm. Functionally, the phosphoenolpyruvate-dependent sugar phosphotransferase system (PTS), a major carbohydrate active -transport system, catalyzes the phosphorylation of incoming sugar substrates concomitant with their translocation across the cell membrane. This Bacillus subtilis (strain 168) protein is Putative phosphotransferase enzyme IIA component YyzE (yyzE).